The sequence spans 312 residues: Serine acetyltransferase 5 (312 aa).

The segment covering Met-1–Leu-17 has biased composition (basic and acidic residues). Positions Met-1 to Glu-25 are disordered.

The protein belongs to the transferase hexapeptide repeat family. In terms of assembly, homomultimer. Mostly expressed in stems, flowers and siliques. Localized in vascular tissues, particularly in phloem.

The protein resides in the cytoplasm. The enzyme catalyses L-serine + acetyl-CoA = O-acetyl-L-serine + CoA. The protein operates within amino-acid biosynthesis; L-cysteine biosynthesis; L-cysteine from L-serine: step 1/2. Feedback inhibitions by L-Ser and acetyl-CoA. The polypeptide is Serine acetyltransferase 5 (SAT5) (Arabidopsis thaliana (Mouse-ear cress)).